The sequence spans 139 residues: MGDITRFGISIDSDLLDSFDRLITRKGYQNRSEAIRDLIRATIVEEKMDAGHEEMVGTVTMVYNHHVRDLADKLTEHQHQHHHQVISALHVHLDAHNCLEVLVLKGSSAEIKQIADELLGVKGVKHGKLFLTSATPEHH.

Ni(2+) contacts are provided by His-79, His-90, His-92, and Cys-98.

This sequence belongs to the transcriptional regulatory CopG/NikR family. Ni(2+) is required as a cofactor.

Its function is as follows. Transcriptional regulator. The sequence is that of Putative nickel-responsive regulator from Trichlorobacter lovleyi (strain ATCC BAA-1151 / DSM 17278 / SZ) (Geobacter lovleyi).